Reading from the N-terminus, the 114-residue chain is Large ribosomal subunit protein uL18 (114 aa).

It belongs to the universal ribosomal protein uL18 family. As to quaternary structure, part of the 50S ribosomal subunit; part of the 5S rRNA/L5/L18/L25 subcomplex. Contacts the 5S and 23S rRNAs.

In terms of biological role, this is one of the proteins that bind and probably mediate the attachment of the 5S RNA into the large ribosomal subunit, where it forms part of the central protuberance. This is Large ribosomal subunit protein uL18 from Parabacteroides distasonis (strain ATCC 8503 / DSM 20701 / CIP 104284 / JCM 5825 / NCTC 11152).